A 530-amino-acid chain; its full sequence is Autoinducer-2 kinase (530 aa).

Belongs to the FGGY kinase family.

It is found in the cytoplasm. It carries out the reaction (S)-4,5-dihydroxypentane-2,3-dione + ATP = (2S)-2-hydroxy-3,4-dioxopentyl phosphate + ADP + H(+). Catalyzes the phosphorylation of autoinducer-2 (AI-2) to phospho-AI-2, which subsequently inactivates the transcriptional regulator LsrR and leads to the transcription of the lsr operon. Phosphorylates the ring-open form of (S)-4,5-dihydroxypentane-2,3-dione (DPD), which is the precursor to all AI-2 signaling molecules, at the C5 position. The polypeptide is Autoinducer-2 kinase (Escherichia coli O139:H28 (strain E24377A / ETEC)).